We begin with the raw amino-acid sequence, 344 residues long: Probable pectinesterase 67 (344 aa).

Residues 1 to 23 form the signal peptide; the sequence is MGHRTRMILVLTLVVMSIWGSDA. N43 and N151 each carry an N-linked (GlcNAc...) asparagine glycan. Q152 is a substrate binding site. D196 acts as the Nucleophile in catalysis. A substrate-binding site is contributed by R256. Residue N282 is glycosylated (N-linked (GlcNAc...) asparagine).

Belongs to the pectinesterase family. Expressed in flower buds.

Its subcellular location is the secreted. The protein resides in the cell wall. It catalyses the reaction [(1-&gt;4)-alpha-D-galacturonosyl methyl ester](n) + n H2O = [(1-&gt;4)-alpha-D-galacturonosyl](n) + n methanol + n H(+). Its pathway is glycan metabolism; pectin degradation; 2-dehydro-3-deoxy-D-gluconate from pectin: step 1/5. In terms of biological role, acts in the modification of cell walls via demethylesterification of cell wall pectin. The protein is Probable pectinesterase 67 (PME67) of Arabidopsis thaliana (Mouse-ear cress).